Reading from the N-terminus, the 308-residue chain is GATA transcription factor 10 (308 aa).

The segment at 214 to 268 (DGIVRICTHCETITTPQWRQGPSGPKTLCNACGVRFKSGRLVPEYRPASSPTFIP) adopts a GATA-type zinc-finger fold.

The protein belongs to the type IV zinc-finger family. Class A subfamily.

It is found in the nucleus. Transcriptional activator that specifically binds 5'-GATA-3' or 5'-GAT-3' motifs within gene promoters. May be involved in the regulation of some light-responsive genes. The sequence is that of GATA transcription factor 10 (GATA10) from Arabidopsis thaliana (Mouse-ear cress).